The chain runs to 499 residues: Kynurenine 3-monooxygenase 3 (499 aa).

The protein belongs to the aromatic-ring hydroxylase family. KMO subfamily. Requires FAD as cofactor.

It is found in the mitochondrion outer membrane. It carries out the reaction L-kynurenine + NADPH + O2 + H(+) = 3-hydroxy-L-kynurenine + NADP(+) + H2O. It functions in the pathway cofactor biosynthesis; NAD(+) biosynthesis; quinolinate from L-kynurenine: step 1/3. Its function is as follows. Catalyzes the hydroxylation of L-kynurenine (L-Kyn) to form 3-hydroxy-L-kynurenine (L-3OHKyn). Required for synthesis of quinolinic acid. This is Kynurenine 3-monooxygenase 3 (bna4-3) from Aspergillus niger (strain ATCC MYA-4892 / CBS 513.88 / FGSC A1513).